The primary structure comprises 552 residues: Antibiotic resistance protein MAB_2355c (552 aa).

ABC transporter domains lie at 4–270 (VQLD…RRWD) and 332–552 (AKRA…PQWV). ATP-binding positions include 37–44 (GPNGTGKT) and 364–371 (GGNGTGKS).

Belongs to the ABC transporter superfamily. ABCF family.

It catalyses the reaction ATP + H2O = ADP + phosphate + H(+). The ATPase activity can be inhibited by ribosome-targeting antibiotics. Functionally, exhibits ATP hydrolysis activity and contributes to macrolide resistance by ribosome protection. Can also hydrolyze GTP, TTP and CTP but to a lesser extent than ATP. In vitro, rescues the transcription and translation activities affected by macrolides. Increased expression correlates with increased resistance to clarithromycin, one of the main drugs used to treat M.abscessus. The chain is Antibiotic resistance protein MAB_2355c from Mycobacteroides abscessus (strain ATCC 19977 / DSM 44196 / CCUG 20993 / CIP 104536 / JCM 13569 / NCTC 13031 / TMC 1543 / L948) (Mycobacterium abscessus).